The following is a 216-amino-acid chain: UDP-N-acetylglucosamine transferase subunit ALG14 (216 aa).

At 1 to 3 (MVC) the chain is on the lumenal side. The chain crosses the membrane as a helical span at residues 4-24 (VLVLAAAAGAVAVFLILRIWV). The Cytoplasmic portion of the chain corresponds to 25-216 (VLRSMDVTPR…PKSVYLGRIV (192 aa)).

Belongs to the ALG14 family. Forms with ALG13 the active heterodimeric UDP-N-acetylglucosamine transferase complex.

It is found in the endoplasmic reticulum membrane. In terms of biological role, part of the UDP-N-acetylglucosamine transferase complex that operates in the biosynthetic pathway of dolichol-linked oligosaccharides, the glycan precursors employed in protein asparagine (N)-glycosylation. The assembly of dolichol-linked oligosaccharides begins on the cytosolic side of the endoplasmic reticulum membrane and finishes in its lumen. The sequential addition of sugars to dolichol pyrophosphate produces dolichol-linked oligosaccharides containing fourteen sugars, including two GlcNAcs, nine mannoses and three glucoses. Once assembled, the oligosaccharides are transferred from the lipid to nascent proteins by oligosaccharyltransferases. Functions as a protein-membrane adapter recruiting ALG13 at the cytoplasmic face of the endoplasmic reticulum, where the complex catalyzes the second step of dolichol pyrophosphate biosynthesis, transferring a beta1,4-linked N-acetylglucosamine (GlcNAc) from UDP-GlcNAc to GlcNAc-pyrophosphatedolichol (Gn-PDol) to produce N,N'-diacetylchitobiosyl diphosphodolichol. N,N'-diacetylchitobiosyl diphosphodolichol is a substrate for ALG1, the following enzyme in the biosynthetic pathway. The chain is UDP-N-acetylglucosamine transferase subunit ALG14 from Homo sapiens (Human).